A 679-amino-acid polypeptide reads, in one-letter code: Biosynthetic arginine decarboxylase (679 aa).

Positions 1–43 (MKHRGQEEMGVESTATSDEVVKVPANGNKLEGKNHKQKKLLPT) are disordered. N6-(pyridoxal phosphate)lysine is present on Lys-149. 331–341 (LDVGGGLGVDY) provides a ligand contact to substrate.

This sequence belongs to the Orn/Lys/Arg decarboxylase class-II family. SpeA subfamily. Mg(2+) is required as a cofactor. Requires pyridoxal 5'-phosphate as cofactor.

It carries out the reaction L-arginine + H(+) = agmatine + CO2. Catalyzes the biosynthesis of agmatine from arginine. In Nostoc sp. (strain PCC 7120 / SAG 25.82 / UTEX 2576), this protein is Biosynthetic arginine decarboxylase.